Consider the following 498-residue polypeptide: Pyridine nucleotide-disulfide oxidoreductase domain-containing protein 1 (498 aa).

M1 is modified (N-acetylmethionine).

It belongs to the class-I pyridine nucleotide-disulfide oxidoreductase family. PYROXD1 subfamily. FAD serves as cofactor.

It is found in the nucleus. The protein resides in the cytoplasm. Its subcellular location is the myofibril. It localises to the sarcomere. Its function is as follows. Probable FAD-dependent oxidoreductase; involved in the cellular oxidative stress response. Required for normal sarcomere structure and muscle fiber integrity. This is Pyridine nucleotide-disulfide oxidoreductase domain-containing protein 1 (Pyroxd1) from Mus musculus (Mouse).